Consider the following 69-residue polypeptide: ATP synthase F(0) complex subunit 8 (69 aa).

Residues 8-24 form a helical membrane-spanning segment; sequence TWLLTITLMILALFCIY. Position 55 is an N6-acetyllysine; alternate (Lys-55). An N6-succinyllysine; alternate modification is found at Lys-55. The residue at position 58 (Lys-58) is an N6-acetyllysine.

It belongs to the ATPase protein 8 family. Component of the ATP synthase complex composed at least of ATP5F1A/subunit alpha, ATP5F1B/subunit beta, ATP5MC1/subunit c (homooctomer), MT-ATP6/subunit a, MT-ATP8/subunit 8, ATP5ME/subunit e, ATP5MF/subunit f, ATP5MG/subunit g, ATP5MK/subunit k, ATP5MJ/subunit j, ATP5F1C/subunit gamma, ATP5F1D/subunit delta, ATP5F1E/subunit epsilon, ATP5PF/subunit F6, ATP5PB/subunit b, ATP5PD/subunit d, ATP5PO/subunit OSCP. ATP synthase complex consists of a soluble F(1) head domain (subunits alpha(3) and beta(3)) - the catalytic core - and a membrane F(0) domain - the membrane proton channel (subunits c, a, 8, e, f, g, k and j). These two domains are linked by a central stalk (subunits gamma, delta, and epsilon) rotating inside the F1 region and a stationary peripheral stalk (subunits F6, b, d, and OSCP). Interacts with PRICKLE3.

It is found in the mitochondrion membrane. Functionally, subunit 8, of the mitochondrial membrane ATP synthase complex (F(1)F(0) ATP synthase or Complex V) that produces ATP from ADP in the presence of a proton gradient across the membrane which is generated by electron transport complexes of the respiratory chain. ATP synthase complex consist of a soluble F(1) head domain - the catalytic core - and a membrane F(1) domain - the membrane proton channel. These two domains are linked by a central stalk rotating inside the F(1) region and a stationary peripheral stalk. During catalysis, ATP synthesis in the catalytic domain of F(1) is coupled via a rotary mechanism of the central stalk subunits to proton translocation. In vivo, can only synthesize ATP although its ATP hydrolase activity can be activated artificially in vitro. Part of the complex F(0) domain. The sequence is that of ATP synthase F(0) complex subunit 8 from Osphranter robustus (Wallaroo).